A 1101-amino-acid chain; its full sequence is Type II inositol polyphosphate 5-phosphatase 15 (1101 aa).

Residues 31–40 show a composition bias toward low complexity; it reads RSAYSSSSSS. Positions 31–54 are disordered; that stretch reads RSAYSSSSSSGDDESQPSVDDSNK. WD repeat units follow at residues 121-162, 180-219, 225-263, 403-432, 433-481, and 483-519; these read LRET…GSGR, FGSAAVVCMIGDEGSRVVWSGHRDGRIRCWRLRGDHGIEE, AHRGPVLSIAISAYGDIWSGSEGGALKVWPWDGALGKSL, DDSRKTEAIVISVDGMIWTGSSNGILMRWD, GNGN…GGWV, and HSGPVIKMAIGAGYLFTLANHGGIRGWNVTSPGPLDN. Catalytic regions lie at residues 749–765 and 828–843; these read DMVIFLGDFNYRLDDIT and KKRIPAWCDRILYRDN. Residue Lys907 forms a Glycyl lysine isopeptide (Lys-Gly) (interchain with G-Cter in ubiquitin) linkage.

This sequence belongs to the inositol polyphosphate 5-phosphatase family. Requires Mg(2+) as cofactor. Predominantly expressed in interfascicular fibers and vascular bundles. Expressed in seedlings, stems, roots and flowers. Expressed at lower level in mature leaves.

It carries out the reaction a 1,2-diacyl-sn-glycero-3-phospho-(1D-myo-inositol-4,5-bisphosphate) + H2O = a 1,2-diacyl-sn-glycero-3-phospho-(1D-myo-inositol 4-phosphate) + phosphate. It catalyses the reaction a 1,2-diacyl-sn-glycero-3-phospho-(1D-myo-inositol-3,4,5-trisphosphate) + H2O = a 1,2-diacyl-sn-glycero-3-phospho-(1D-myo-inositol-3,4-bisphosphate) + phosphate. The catalysed reaction is 1D-myo-inositol 1,4,5-trisphosphate + H2O = 1D-myo-inositol 1,4-bisphosphate + phosphate. In terms of biological role, has phosphatase activity toward PtdIns(4,5)P2, PtdIns(3,4,5)P3 and Ins(1,4,5)P3. Has a higher substrate affinity toward PtdIns(4,5)P2. Required for secondary wall synthesis and actin organization in fiber cells. In Arabidopsis thaliana (Mouse-ear cress), this protein is Type II inositol polyphosphate 5-phosphatase 15.